Reading from the N-terminus, the 363-residue chain is Histidinol-phosphate aminotransferase (363 aa).

At Lys-218 the chain carries N6-(pyridoxal phosphate)lysine.

Belongs to the class-II pyridoxal-phosphate-dependent aminotransferase family. Histidinol-phosphate aminotransferase subfamily. As to quaternary structure, homodimer. It depends on pyridoxal 5'-phosphate as a cofactor.

It catalyses the reaction L-histidinol phosphate + 2-oxoglutarate = 3-(imidazol-4-yl)-2-oxopropyl phosphate + L-glutamate. It participates in amino-acid biosynthesis; L-histidine biosynthesis; L-histidine from 5-phospho-alpha-D-ribose 1-diphosphate: step 7/9. In Xanthomonas euvesicatoria pv. vesicatoria (strain 85-10) (Xanthomonas campestris pv. vesicatoria), this protein is Histidinol-phosphate aminotransferase.